A 130-amino-acid polypeptide reads, in one-letter code: Small ribosomal subunit protein uS9 (130 aa).

Residues 108 to 130 form a disordered region; the sequence is SREKERKKYGQRGARARFQYSKR.

Belongs to the universal ribosomal protein uS9 family.

The polypeptide is Small ribosomal subunit protein uS9 (Solidesulfovibrio magneticus (strain ATCC 700980 / DSM 13731 / RS-1) (Desulfovibrio magneticus)).